We begin with the raw amino-acid sequence, 315 residues long: MATNSEFLIPARADLAAAREEWLKSLKTMRRLSDNTLIAYERDTRQFLQFLTGHLGEPPSLKEIGNLRIADLRSFLANRRNDGAGARTLGRGLAGVRSLLRHLEKRGLVNAAGASAMRAPRQPKSLPKPLTADDARRVVSADGQMAEEPWIAARNAAVLTLLYGCGLRISEALGLSGDALSDPSARSMTITGKGSKTRLVPLLPAVHKAVAQYRALCPFDLSAGQPLFRGAKGGPLHAAIIQREMQKLRAGLGLPDSATPHALRHSFATHLLGRGGDLRTIQELLGHASLSTTQVYTGVDTQRLLEVYDKTHPRA.

A Core-binding (CB) domain is found at 13 to 104 (ADLAAAREEW…GVRSLLRHLE (92 aa)). Positions 125–309 (SLPKPLTADD…DTQRLLEVYD (185 aa)) constitute a Tyr recombinase domain. Active-site residues include Arg168, Lys193, His261, Arg264, and His287. Tyr296 serves as the catalytic O-(3'-phospho-DNA)-tyrosine intermediate.

This sequence belongs to the 'phage' integrase family. XerC subfamily. As to quaternary structure, forms a cyclic heterotetrameric complex composed of two molecules of XerC and two molecules of XerD.

The protein resides in the cytoplasm. In terms of biological role, site-specific tyrosine recombinase, which acts by catalyzing the cutting and rejoining of the recombining DNA molecules. The XerC-XerD complex is essential to convert dimers of the bacterial chromosome into monomers to permit their segregation at cell division. It also contributes to the segregational stability of plasmids. The polypeptide is Tyrosine recombinase XerC (Brucella suis biovar 1 (strain 1330)).